Here is a 156-residue protein sequence, read N- to C-terminus: ATP synthase subunit b (156 aa).

Residues 3-23 (ITLTIFAQALAFAGLIWIVAT) form a helical membrane-spanning segment.

It belongs to the ATPase B chain family. F-type ATPases have 2 components, F(1) - the catalytic core - and F(0) - the membrane proton channel. F(1) has five subunits: alpha(3), beta(3), gamma(1), delta(1), epsilon(1). F(0) has three main subunits: a(1), b(2) and c(10-14). The alpha and beta chains form an alternating ring which encloses part of the gamma chain. F(1) is attached to F(0) by a central stalk formed by the gamma and epsilon chains, while a peripheral stalk is formed by the delta and b chains.

It is found in the cell inner membrane. Its function is as follows. F(1)F(0) ATP synthase produces ATP from ADP in the presence of a proton or sodium gradient. F-type ATPases consist of two structural domains, F(1) containing the extramembraneous catalytic core and F(0) containing the membrane proton channel, linked together by a central stalk and a peripheral stalk. During catalysis, ATP synthesis in the catalytic domain of F(1) is coupled via a rotary mechanism of the central stalk subunits to proton translocation. In terms of biological role, component of the F(0) channel, it forms part of the peripheral stalk, linking F(1) to F(0). The sequence is that of ATP synthase subunit b from Xanthomonas axonopodis pv. citri (strain 306).